We begin with the raw amino-acid sequence, 817 residues long: Lon protease (817 aa).

Positions Leu44 to Leu239 constitute a Lon N-terminal domain. Gly390–Thr397 is a binding site for ATP. In terms of domain architecture, Lon proteolytic spans Asn626–Asp807. Residues Ser713 and Lys756 contribute to the active site.

This sequence belongs to the peptidase S16 family. Homohexamer. Organized in a ring with a central cavity.

Its subcellular location is the cytoplasm. It catalyses the reaction Hydrolysis of proteins in presence of ATP.. In terms of biological role, ATP-dependent serine protease that mediates the selective degradation of mutant and abnormal proteins as well as certain short-lived regulatory proteins. Required for cellular homeostasis and for survival from DNA damage and developmental changes induced by stress. Degrades polypeptides processively to yield small peptide fragments that are 5 to 10 amino acids long. Binds to DNA in a double-stranded, site-specific manner. The polypeptide is Lon protease (Flavobacterium johnsoniae (strain ATCC 17061 / DSM 2064 / JCM 8514 / BCRC 14874 / CCUG 350202 / NBRC 14942 / NCIMB 11054 / UW101) (Cytophaga johnsonae)).